Consider the following 375-residue polypeptide: Alcohol dehydrogenase 1A (375 aa).

N-acetylserine is present on serine 2. The residue at position 23 (serine 23) is a Phosphoserine. Tyrosine 35 carries the post-translational modification Phosphotyrosine. A Zn(2+)-binding site is contributed by cysteine 47. Residue 48–52 participates in NAD(+) binding; that stretch reads GTDDH. Residues histidine 68, cysteine 98, cysteine 101, cysteine 104, cysteine 112, and cysteine 175 each contribute to the Zn(2+) site. Residues 200 to 205, aspartate 224, lysine 229, isoleucine 270, 293 to 295, 318 to 320, and arginine 370 contribute to the NAD(+) site; these read GLGGVG, VGV, and AVY.

The protein belongs to the zinc-containing alcohol dehydrogenase family. In terms of assembly, dimer of identical or heterodimer of closely related subunits alpha, beta, or gamma that are encoded by genes ADH1A, ADH1B, and ADH1C, respectively. Zn(2+) serves as cofactor.

The protein resides in the cytoplasm. It carries out the reaction a primary alcohol + NAD(+) = an aldehyde + NADH + H(+). The enzyme catalyses a secondary alcohol + NAD(+) = a ketone + NADH + H(+). It catalyses the reaction butan-1-ol + NAD(+) = butanal + NADH + H(+). The catalysed reaction is 1-propanol + NAD(+) = propanal + NADH + H(+). It carries out the reaction propan-2-ol + NAD(+) = acetone + NADH + H(+). In terms of biological role, alcohol dehydrogenase. Oxidizes primary as well as secondary alcohols. Ethanol is a very poor substrate. This is Alcohol dehydrogenase 1A (ADH1A) from Macaca mulatta (Rhesus macaque).